The sequence spans 167 residues: Phospholipase A2 (167 aa).

Residues M1 to G18 form the signal peptide. Positions W19–R33 are excised as a propeptide. Ca(2+)-binding residues include W41, G43, and G45. Disulfide bonds link C42–C64, C63–C103, C70–C96, C94–C128, and C138–C146. N46 carries N-linked (GlcNAc...) asparagine glycosylation. H67 is a catalytic residue. Residue D68 coordinates Ca(2+). D97 is an active-site residue.

Belongs to the phospholipase A2 family. Group III subfamily. Requires Ca(2+) as cofactor. Post-translationally, N-glycosylated; contains mannose, N-acetylglucosamine and fucose alphal-6 and/or alphal-3 linked to the innermost N-acetylglucosamine. As to expression, expressed by the venom gland.

The protein localises to the secreted. It catalyses the reaction a 1,2-diacyl-sn-glycero-3-phosphocholine + H2O = a 1-acyl-sn-glycero-3-phosphocholine + a fatty acid + H(+). Functionally, in vivo, intraplantar injection in mice cause spontaneous pain behaviors and paw swelling. PLA2 catalyzes the calcium-dependent hydrolysis of the 2-acyl groups in 3-sn-phosphoglycerides. The chain is Phospholipase A2 from Apis mellifera (Honeybee).